A 141-amino-acid chain; its full sequence is Nucleoside diphosphate kinase (141 aa).

ATP contacts are provided by Lys-9, Phe-57, Arg-85, Thr-91, Arg-102, and Asn-112. His-115 serves as the catalytic Pros-phosphohistidine intermediate.

It belongs to the NDK family. In terms of assembly, homotetramer. Requires Mg(2+) as cofactor.

It localises to the cytoplasm. It catalyses the reaction a 2'-deoxyribonucleoside 5'-diphosphate + ATP = a 2'-deoxyribonucleoside 5'-triphosphate + ADP. The enzyme catalyses a ribonucleoside 5'-diphosphate + ATP = a ribonucleoside 5'-triphosphate + ADP. Its function is as follows. Major role in the synthesis of nucleoside triphosphates other than ATP. The ATP gamma phosphate is transferred to the NDP beta phosphate via a ping-pong mechanism, using a phosphorylated active-site intermediate. This Prosthecochloris aestuarii (strain DSM 271 / SK 413) protein is Nucleoside diphosphate kinase.